Reading from the N-terminus, the 103-residue chain is Co-chaperonin GroES (103 aa).

The protein belongs to the GroES chaperonin family. Heptamer of 7 subunits arranged in a ring. Interacts with the chaperonin GroEL.

It is found in the cytoplasm. Together with the chaperonin GroEL, plays an essential role in assisting protein folding. The GroEL-GroES system forms a nano-cage that allows encapsulation of the non-native substrate proteins and provides a physical environment optimized to promote and accelerate protein folding. GroES binds to the apical surface of the GroEL ring, thereby capping the opening of the GroEL channel. In Synechococcus sp. (strain JA-3-3Ab) (Cyanobacteria bacterium Yellowstone A-Prime), this protein is Co-chaperonin GroES.